The following is a 267-amino-acid chain: 1-(5-phosphoribosyl)-5-[(5-phosphoribosylamino)methylideneamino] imidazole-4-carboxamide isomerase (267 aa).

The protein belongs to the HisA/HisF family.

Its subcellular location is the cytoplasm. It catalyses the reaction 1-(5-phospho-beta-D-ribosyl)-5-[(5-phospho-beta-D-ribosylamino)methylideneamino]imidazole-4-carboxamide = 5-[(5-phospho-1-deoxy-D-ribulos-1-ylimino)methylamino]-1-(5-phospho-beta-D-ribosyl)imidazole-4-carboxamide. It functions in the pathway amino-acid biosynthesis; L-histidine biosynthesis; L-histidine from 5-phospho-alpha-D-ribose 1-diphosphate: step 4/9. In Kluyveromyces lactis (strain ATCC 8585 / CBS 2359 / DSM 70799 / NBRC 1267 / NRRL Y-1140 / WM37) (Yeast), this protein is 1-(5-phosphoribosyl)-5-[(5-phosphoribosylamino)methylideneamino] imidazole-4-carboxamide isomerase (HIS6).